Here is a 197-residue protein sequence, read N- to C-terminus: Probable nicotinate-nucleotide adenylyltransferase (197 aa).

The protein belongs to the NadD family.

The enzyme catalyses nicotinate beta-D-ribonucleotide + ATP + H(+) = deamido-NAD(+) + diphosphate. It participates in cofactor biosynthesis; NAD(+) biosynthesis; deamido-NAD(+) from nicotinate D-ribonucleotide: step 1/1. Catalyzes the reversible adenylation of nicotinate mononucleotide (NaMN) to nicotinic acid adenine dinucleotide (NaAD). This chain is Probable nicotinate-nucleotide adenylyltransferase, found in Leptospira borgpetersenii serovar Hardjo-bovis (strain JB197).